Here is a 753-residue protein sequence, read N- to C-terminus: Centromere protein I (753 aa).

Residues 1–15 (MQRRQSSKHSKRPLQ) are compositionally biased toward basic residues. The disordered stretch occupies residues 1–54 (MQRRQSSKHSKRPLQVHHSNQTDLSAWRKGGTVDTEKSAQNRQSLSDQKNDNEQ).

Belongs to the CENP-I/CTF3 family. As to quaternary structure, component of the CENPA-HI complex, at least composed of CENPH, CENPI, CENPK, CENPL, CENPM, CENPO and CENPP.

It is found in the nucleus. It localises to the chromosome. The protein localises to the centromere. In terms of biological role, component of the CENPA-HI complex, a centromeric complex involved in assembly of kinetochore proteins, mitotic progression and chromosome segregation. Required for the localization of CENPC but not CENPA to the centromere. It however may be involved in incorporation of newly synthesized CENPA into centromeres via its interaction with the CENPA-NAC complex. This is Centromere protein I (CENPI) from Gallus gallus (Chicken).